The following is a 115-amino-acid chain: Superoxide reductase (115 aa).

Fe cation-binding residues include Glu-14, His-16, His-41, His-47, Cys-102, and His-105.

The protein belongs to the desulfoferrodoxin family. As to quaternary structure, homotetramer. The cofactor is Fe cation.

The enzyme catalyses reduced [rubredoxin] + superoxide + 2 H(+) = oxidized [rubredoxin] + H2O2. Uses electrons from reduced NADP, by way of rubredoxin and an oxidoreductase, to catalyze the reduction of superoxide to hydrogen peroxide. The chain is Superoxide reductase (sorA) from Thermococcus kodakarensis (strain ATCC BAA-918 / JCM 12380 / KOD1) (Pyrococcus kodakaraensis (strain KOD1)).